Consider the following 158-residue polypeptide: Transcription elongation factor GreA (158 aa).

Belongs to the GreA/GreB family.

Its function is as follows. Necessary for efficient RNA polymerase transcription elongation past template-encoded arresting sites. The arresting sites in DNA have the property of trapping a certain fraction of elongating RNA polymerases that pass through, resulting in locked ternary complexes. Cleavage of the nascent transcript by cleavage factors such as GreA or GreB allows the resumption of elongation from the new 3'terminus. GreA releases sequences of 2 to 3 nucleotides. The sequence is that of Transcription elongation factor GreA from Sinorhizobium medicae (strain WSM419) (Ensifer medicae).